The following is a 626-amino-acid chain: Alpha terpineol synthase, chloroplastic (626 aa).

Residues 1–38 constitute a chloroplast transit peptide; the sequence is MALLSVAPLASKSRLHKTLITSAHHLKPSPTTIPTLPV. Mg(2+) contacts are provided by Asp377, Asp381, and Asp529. The DDXXD motif signature appears at 377 to 381; that stretch reads DDIYD.

The protein belongs to the terpene synthase family. Tpsd subfamily. The cofactor is Mg(2+). It depends on Mn(2+) as a cofactor.

Its subcellular location is the plastid. It localises to the chloroplast. The enzyme catalyses (2E)-geranyl diphosphate + H2O = (S)-alpha-terpineol + diphosphate. The catalysed reaction is (2E)-geranyl diphosphate + H2O = (R)-alpha-terpineol + diphosphate. It catalyses the reaction (2E)-geranyl diphosphate + H2O = (2E)-geraniol + diphosphate. It carries out the reaction (2E)-geranyl diphosphate = terpinolene + diphosphate. The enzyme catalyses (2E)-geranyl diphosphate = (4S)-limonene + diphosphate. The protein operates within terpene metabolism; oleoresin biosynthesis. Its pathway is secondary metabolite biosynthesis; terpenoid biosynthesis. Functionally, monoterpene synthase (TPS) involved in the biosynthesis of monoterpene natural products included in conifer oleoresin secretions and volatile emissions; these compounds contribute to biotic and abiotic stress defense against herbivores and pathogens. Catalyzes the conversion of (2E)-geranyl diphosphate (GPP) to (-)-alpha-terpineol, (+)-alpha-terpineol and terpin-4-ol, and, to a lower extent, to geraniol, terpinolene and (-)-limonene. This is Alpha terpineol synthase, chloroplastic from Pinus banksiana (Jack pine).